Consider the following 82-residue polypeptide: RNA-binding protein GWCH70_0105 (82 aa).

It belongs to the eukaryotic ribosomal protein eL8 family.

The protein is RNA-binding protein GWCH70_0105 of Geobacillus sp. (strain WCH70).